Here is a 347-residue protein sequence, read N- to C-terminus: Large ribosomal subunit protein uL3 (347 aa).

Belongs to the universal ribosomal protein uL3 family. In terms of assembly, part of the 50S ribosomal subunit. Forms a cluster with proteins L14 and L24e.

One of the primary rRNA binding proteins, it binds directly near the 3'-end of the 23S rRNA, where it nucleates assembly of the 50S subunit. The chain is Large ribosomal subunit protein uL3 from Caldivirga maquilingensis (strain ATCC 700844 / DSM 13496 / JCM 10307 / IC-167).